Here is a 142-residue protein sequence, read N- to C-terminus: 5-hydroxymethyl-dUMP N-hydrolase (142 aa).

Positions 7, 9, 10, 11, 78, 80, 84, and 108 each coordinate 5-hydroxymethyl-dUMP.

The protein belongs to the 2'-deoxynucleoside 5'-phosphate N-hydrolase 1 family. In terms of assembly, monomer and homodimer.

The protein resides in the cytoplasm. It localises to the nucleus. It catalyses the reaction 5-hydroxymethyl-dUMP + H2O = 5-hydroxymethyluracil + 2-deoxy-D-ribose 5-phosphate. Part of a nucleotide salvage pathway that eliminates epigenetically modified 5-hydroxymethyl-dCMP (hmdCMP) in a two-step process entailing deamination to cytotoxic 5-hydroxymethyl-dUMP (hmdUMP), followed by its hydrolysis into 5-hydroxymethyluracil (hmU) and 2-deoxy-D-ribose 5-phosphate (deoxyribosephosphate). Catalyzes the second step in that pathway, the hydrolysis of the N-glycosidic bond in hmdUMP, degrading this cytotoxic nucleotide to avoid its genomic integration. The sequence is that of 5-hydroxymethyl-dUMP N-hydrolase (dnph1) from Tetraodon nigroviridis (Spotted green pufferfish).